A 310-amino-acid chain; its full sequence is tRNA uridine(34) hydroxylase (310 aa).

Residues 127-225 enclose the Rhodanese domain; sequence KDKDTIVIDT…YLEDISKEES (99 aa). Catalysis depends on Cys185, which acts as the Cysteine persulfide intermediate.

The protein belongs to the TrhO family.

The catalysed reaction is uridine(34) in tRNA + AH2 + O2 = 5-hydroxyuridine(34) in tRNA + A + H2O. In terms of biological role, catalyzes oxygen-dependent 5-hydroxyuridine (ho5U) modification at position 34 in tRNAs. This chain is tRNA uridine(34) hydroxylase, found in Prochlorococcus marinus (strain MIT 9515).